A 338-amino-acid polypeptide reads, in one-letter code: Ribosomal RNA small subunit methyltransferase C (338 aa).

It belongs to the methyltransferase superfamily. RsmC family. As to quaternary structure, monomer.

It is found in the cytoplasm. It catalyses the reaction guanosine(1207) in 16S rRNA + S-adenosyl-L-methionine = N(2)-methylguanosine(1207) in 16S rRNA + S-adenosyl-L-homocysteine + H(+). In terms of biological role, specifically methylates the guanine in position 1207 of 16S rRNA in the 30S particle. The protein is Ribosomal RNA small subunit methyltransferase C of Photorhabdus laumondii subsp. laumondii (strain DSM 15139 / CIP 105565 / TT01) (Photorhabdus luminescens subsp. laumondii).